The sequence spans 236 residues: 7-cyano-7-deazaguanine synthase (236 aa).

7–17 serves as a coordination point for ATP; it reads CSGGLDSVSLA. Zn(2+)-binding residues include cysteine 185, cysteine 193, cysteine 196, and cysteine 199.

Belongs to the QueC family. It depends on Zn(2+) as a cofactor.

The enzyme catalyses 7-carboxy-7-deazaguanine + NH4(+) + ATP = 7-cyano-7-deazaguanine + ADP + phosphate + H2O + H(+). It functions in the pathway purine metabolism; 7-cyano-7-deazaguanine biosynthesis. Catalyzes the ATP-dependent conversion of 7-carboxy-7-deazaguanine (CDG) to 7-cyano-7-deazaguanine (preQ(0)). This chain is 7-cyano-7-deazaguanine synthase, found in Rhizobium rhizogenes (strain K84 / ATCC BAA-868) (Agrobacterium radiobacter).